The primary structure comprises 356 residues: DNA polymerase IV (356 aa).

One can recognise a UmuC domain in the interval 6–187 (IIHVDMDYFF…LDIGDFPGVG (182 aa)). Residues D10 and D105 each contribute to the Mg(2+) site. E106 is an active-site residue.

Belongs to the DNA polymerase type-Y family. In terms of assembly, monomer. The cofactor is Mg(2+).

The protein resides in the cytoplasm. It catalyses the reaction DNA(n) + a 2'-deoxyribonucleoside 5'-triphosphate = DNA(n+1) + diphosphate. In terms of biological role, poorly processive, error-prone DNA polymerase involved in untargeted mutagenesis. Copies undamaged DNA at stalled replication forks, which arise in vivo from mismatched or misaligned primer ends. These misaligned primers can be extended by PolIV. Exhibits no 3'-5' exonuclease (proofreading) activity. May be involved in translesional synthesis, in conjunction with the beta clamp from PolIII. The polypeptide is DNA polymerase IV (Staphylococcus saprophyticus subsp. saprophyticus (strain ATCC 15305 / DSM 20229 / NCIMB 8711 / NCTC 7292 / S-41)).